We begin with the raw amino-acid sequence, 78 residues long: Protein Class8-like (78 aa).

The N-terminal stretch at 1–19 (MRTLVVLLIGAVLLCSANA) is a signal peptide. The propeptide occupies 20-36 (FLDELLAESVNDMTDKR). The region spanning 38–78 (CFDKYKSNICGGVISPAHCVRRSGRMAKFAKENCAHFCGFC) is the ShKT domain. Disulfide bonds link C38/C78, C47/C71, and C56/C75.

In terms of tissue distribution, expressed in ganglion neurons residing in the mesoglea (observed in both planulae and primary polyps). Not expressed in nematocytes.

Its function is as follows. Probable neuropeptide. In Nematostella vectensis (Starlet sea anemone), this protein is Protein Class8-like.